Here is an 839-residue protein sequence, read N- to C-terminus: Small conductance calcium-activated potassium channel protein 2 (839 aa).

Disordered regions lie at residues 1 to 33 (MPIV…QESP), 64 to 115 (QRGF…QQPG), 195 to 258 (ALRQ…RRES), and 280 to 375 (SNLS…KKNQ). Composition is skewed to low complexity over residues 198–212 (QQYA…QYHQ) and 219–235 (ATSP…GPPL). Basic residues predominate over residues 236–253 (SHHHHHPHPAHHQHHQPQ). Positions 313-326 (SSPSAAAAASSSAP) are enriched in low complexity. Gly residues predominate over residues 345-363 (GTGGGGSTGGGGGGSGHGS). Residues 398-418 (ALIFGMFGIVVMVIETELSWG) traverse the membrane as a helical segment. Y420 is modified (phosphotyrosine). Residues 428–448 (LALKCLISLSTIILLGLIIVY) form a helical membrane-spanning segment. The chain crosses the membrane as a helical span at residues 474 to 494 (IFFICLEILVCAIHPIPGNYT). A helical membrane pass occupies residues 516–536 (IILSIPMFLRLYLIARVMLLH). The helical transmembrane segment at 565–585 (LMTICPGTVLLVFSISLWIIA) threads the bilayer. Residues 605-625 (FLGAMWLISITFLSIGYGDMV) constitute an intramembrane region (pore-forming). A helical transmembrane segment spans residues 634 to 654 (VCLLTGIMGAGCTALVVAVVA). A calmodulin-binding region spans residues 672–748 (DTQLTKRVKN…LVDLAKTQNI (77 aa)). Basic and acidic residues predominate over residues 810–819 (HVSYNAERSR). Positions 810 to 839 (HVSYNAERSRSSSRRRRSSSTAPPTSSESS) are disordered. Residues 828-839 (SSTAPPTSSESS) show a composition bias toward low complexity.

Belongs to the potassium channel KCNN family. KCa2.2/KCNN2 subfamily. As to quaternary structure, homodimer. Heteromultimer with KCNN1 and KCNN3. The complex is composed of 4 channel subunits each of which binds to a calmodulin subunit which regulates the channel activity through calcium-binding. Interacts (via N-terminal domain) with MPP2. In terms of tissue distribution, expressed in atrial and ventricular myocytes with higher levels in atrial myocytes (at protein level). Highly expressed in brain, liver and colon with low levels in kidney and testis. In colon, detected in smooth muscle cells.

The protein resides in the membrane. It is found in the cytoplasm. The protein localises to the myofibril. It localises to the sarcomere. Its subcellular location is the z line. It carries out the reaction K(+)(in) = K(+)(out). With respect to regulation, inhibited by bee venom neurotoxin apamin. Inhibited by UCL 1684 and tetraethylammonium (TEA). Functionally, small conductance calcium-activated potassium channel that mediates the voltage-independent transmembrane transfer of potassium across the cell membrane through a constitutive interaction with calmodulin which binds the intracellular calcium allowing its opening. The current is characterized by a voltage-independent activation, an intracellular calcium concentration increase-dependent activation and a single-channel conductance of about 3 picosiemens. Also presents an inwardly rectifying current, thus reducing its already small outward conductance of potassium ions, which is particularly the case when the membrane potential displays positive values, above + 20 mV. The inward rectification could be due to a blockade of the outward current by intracellular divalent cations such as calcium and magnesium and could also be due to an intrinsic property of the channel pore, independent of intracellular divalent ions. There are three positively charged amino acids in the S6 transmembrane domain, close to the pore, that collectively control the conductance and rectification through an electrostatic mechanism. Additionally, electrostatic contributions from these residues also play an important role in determining the intrinsic open probability of the channel in the absence of calcium, affecting the apparent calcium affinity for activation. Forms an heteromeric complex with calmodulin, which is constitutively associated in a calcium-independent manner. Channel opening is triggered when calcium binds the calmodulin resulting in a rotary movement leading to the formation of the dimeric complex to open the gate. Plays a role in the repolarization phase of cardiac action potential. The protein is Small conductance calcium-activated potassium channel protein 2 of Mus musculus (Mouse).